We begin with the raw amino-acid sequence, 445 residues long: Argininosuccinate synthase (445 aa).

Residues 17 to 25 (AFSGGLDTS) and A43 each bind ATP. Y99 is an L-citrulline binding site. The ATP site is built by G129 and T131. The L-aspartate site is built by T131, N135, and D136. N135 lines the L-citrulline pocket. D136 is an ATP binding site. Positions 139 and 192 each coordinate L-citrulline. Residue D194 coordinates ATP. Positions 201, 203, and 280 each coordinate L-citrulline.

Belongs to the argininosuccinate synthase family. Type 2 subfamily. In terms of assembly, homotetramer.

It localises to the cytoplasm. The catalysed reaction is L-citrulline + L-aspartate + ATP = 2-(N(omega)-L-arginino)succinate + AMP + diphosphate + H(+). Its pathway is amino-acid biosynthesis; L-arginine biosynthesis; L-arginine from L-ornithine and carbamoyl phosphate: step 2/3. The sequence is that of Argininosuccinate synthase from Burkholderia cenocepacia (strain HI2424).